We begin with the raw amino-acid sequence, 326 residues long: Protein BugT (326 aa).

The N-terminal stretch at 1–25 (MNMTRLLAVIGIFIATAGIAAPVSA) is a signal peptide.

This sequence belongs to the UPF0065 (bug) family.

Its subcellular location is the periplasm. This Bordetella pertussis (strain Tohama I / ATCC BAA-589 / NCTC 13251) protein is Protein BugT (bugT).